The sequence spans 287 residues: uncharacterized protein (287 aa).

2 helical membrane passes run 12–32 and 217–237; these read IILLFGMLVFLVLLGLGGAAL and YTIGAITLVSVSGGVLAVLIV.

The protein resides in the cell membrane. This is an uncharacterized protein from Mycoplasma pneumoniae (strain ATCC 29342 / M129 / Subtype 1) (Mycoplasmoides pneumoniae).